The chain runs to 232 residues: Large ribosomal subunit protein uL1 (232 aa).

It belongs to the universal ribosomal protein uL1 family. As to quaternary structure, part of the 50S ribosomal subunit.

Functionally, binds directly to 23S rRNA. The L1 stalk is quite mobile in the ribosome, and is involved in E site tRNA release. Its function is as follows. Protein L1 is also a translational repressor protein, it controls the translation of the L11 operon by binding to its mRNA. This chain is Large ribosomal subunit protein uL1, found in Bartonella quintana (strain Toulouse) (Rochalimaea quintana).